Here is a 271-residue protein sequence, read N- to C-terminus: Urease accessory protein UreD (271 aa).

The protein belongs to the UreD family. In terms of assembly, ureD, UreF and UreG form a complex that acts as a GTP-hydrolysis-dependent molecular chaperone, activating the urease apoprotein by helping to assemble the nickel containing metallocenter of UreC. The UreE protein probably delivers the nickel.

The protein localises to the cytoplasm. In terms of biological role, required for maturation of urease via the functional incorporation of the urease nickel metallocenter. The protein is Urease accessory protein UreD of Azorhizobium caulinodans (strain ATCC 43989 / DSM 5975 / JCM 20966 / LMG 6465 / NBRC 14845 / NCIMB 13405 / ORS 571).